The sequence spans 183 residues: Der GTPase-activating protein YihI (183 aa).

The disordered stretch occupies residues 1 to 101 (MSRSKKTRKG…KLTDEQKLLK (101 aa)). Composition is skewed to basic and acidic residues over residues 22-46 (KKQD…RHNE) and 92-101 (KLTDEQKLLK).

Belongs to the YihI family. Interacts with Der.

Its function is as follows. A GTPase-activating protein (GAP) that modifies Der/EngA GTPase function. May play a role in ribosome biogenesis. In Shewanella oneidensis (strain ATCC 700550 / JCM 31522 / CIP 106686 / LMG 19005 / NCIMB 14063 / MR-1), this protein is Der GTPase-activating protein YihI.